Consider the following 315-residue polypeptide: Olfactory receptor 4A8 (315 aa).

At 1–24 the chain is on the extracellular side; sequence MRQNNNITEFVLLGFSQYPDVQNA. Asparagine 6 carries an N-linked (GlcNAc...) asparagine glycan. The helical transmembrane segment at 25–45 threads the bilayer; that stretch reads LFVMFLLIYIVTMVGNLLIVV. Residues 46-57 are Cytoplasmic-facing; it reads SIIASPFLGSPV. A helical membrane pass occupies residues 58–80; that stretch reads YFFLACLSFIDAVYSTTISPVLI. Over 81 to 95 the chain is Extracellular; it reads VDLLCDKKTISFPAC. A disulfide bridge links cysteine 95 with cysteine 177. A helical transmembrane segment spans residues 96-116; the sequence is MGQLFIEHLFGDTDVFLLVVM. The Cytoplasmic segment spans residues 117–139; sequence AYDRYVATCKPLRYLTIMNRQVC. The helical transmembrane segment at 140–160 threads the bilayer; that stretch reads ILLLVVAVTGGFLHSVFQILV. Residues 161-193 lie on the Extracellular side of the membrane; it reads VYSLPFCGPNVIYHFFCNIYPLLDLECTDTYFV. A helical transmembrane segment spans residues 194–214; the sequence is GLAVVFNGGAICMVIFTLLLI. At 215 to 235 the chain is on the cytoplasmic side; the sequence is SYGVILNSLKTYSPEGRHKAP. The helical transmembrane segment at 236–256 threads the bilayer; that stretch reads FICSSHFIMVILFFVPCIFLY. Residues 257 to 266 lie on the Extracellular side of the membrane; it reads VRPVSNFPID. A helical membrane pass occupies residues 267–287; sequence KFLTVFYSVITPKLNPFIYML. Topologically, residues 288 to 315 are cytoplasmic; that stretch reads RNSEMRNAIENLLGYQSGKTGFRCSKLN.

Belongs to the G-protein coupled receptor 1 family.

It is found in the cell membrane. Odorant receptor. The chain is Olfactory receptor 4A8 (OR4A8) from Homo sapiens (Human).